Reading from the N-terminus, the 287-residue chain is 4-hydroxybenzoate octaprenyltransferase (287 aa).

The next 9 membrane-spanning stretches (helical) occupy residues 22–42 (IGTYLLLWPTYWALWIASDGW), 45–65 (LQLLLVFSLGVFIMRSAGCVI), 95–115 (AINLFGVLIGMAFGLVLMLSW), 116–136 (STIYLSVVAVLLAAIYPFMKR), 140–160 (LPQLFLGAAFSWGMIMAFSEA), 162–182 (GEIPLVAWLLFTANLCWTIAY), 214–234 (IGFLQLMTLALLWTVGDILAF), 237–257 (PYQLCIIAAAGLFSYQQLLIV), and 264–284 (CFQAFLHNHWVGLVVFVGIAI).

It belongs to the UbiA prenyltransferase family. It depends on Mg(2+) as a cofactor.

It localises to the cell inner membrane. The enzyme catalyses all-trans-octaprenyl diphosphate + 4-hydroxybenzoate = 4-hydroxy-3-(all-trans-octaprenyl)benzoate + diphosphate. Its pathway is cofactor biosynthesis; ubiquinone biosynthesis. Its function is as follows. Catalyzes the prenylation of para-hydroxybenzoate (PHB) with an all-trans polyprenyl group. Mediates the second step in the final reaction sequence of ubiquinone-8 (UQ-8) biosynthesis, which is the condensation of the polyisoprenoid side chain with PHB, generating the first membrane-bound Q intermediate 3-octaprenyl-4-hydroxybenzoate. The protein is 4-hydroxybenzoate octaprenyltransferase of Colwellia psychrerythraea (strain 34H / ATCC BAA-681) (Vibrio psychroerythus).